The chain runs to 205 residues: Urease accessory protein UreG 1 (205 aa).

GTP is bound at residue 14–21; sequence GPVGSGKT.

The protein belongs to the SIMIBI class G3E GTPase family. UreG subfamily. In terms of assembly, homodimer. UreD, UreF and UreG form a complex that acts as a GTP-hydrolysis-dependent molecular chaperone, activating the urease apoprotein by helping to assemble the nickel containing metallocenter of UreC. The UreE protein probably delivers the nickel.

The protein localises to the cytoplasm. In terms of biological role, facilitates the functional incorporation of the urease nickel metallocenter. This process requires GTP hydrolysis, probably effectuated by UreG. The protein is Urease accessory protein UreG 1 of Methylobacterium radiotolerans (strain ATCC 27329 / DSM 1819 / JCM 2831 / NBRC 15690 / NCIMB 10815 / 0-1).